Here is a 36-residue protein sequence, read N- to C-terminus: Photosystem I reaction center subunit VIII (36 aa).

A helical transmembrane segment spans residues 8 to 28 (SLFVPLVGLVFPAIAMASLFL).

The protein belongs to the PsaI family.

Its subcellular location is the plastid. The protein localises to the chloroplast thylakoid membrane. In terms of biological role, may help in the organization of the PsaL subunit. This is Photosystem I reaction center subunit VIII from Brassica oleracea (Wild cabbage).